We begin with the raw amino-acid sequence, 307 residues long: tRNA-cytidine(32) 2-sulfurtransferase (307 aa).

Residues 44 to 49 carry the PP-loop motif motif; that stretch reads SGGKDS. Positions 119, 122, and 210 each coordinate [4Fe-4S] cluster.

This sequence belongs to the TtcA family. In terms of assembly, homodimer. It depends on Mg(2+) as a cofactor. The cofactor is [4Fe-4S] cluster.

The protein localises to the cytoplasm. The catalysed reaction is cytidine(32) in tRNA + S-sulfanyl-L-cysteinyl-[cysteine desulfurase] + AH2 + ATP = 2-thiocytidine(32) in tRNA + L-cysteinyl-[cysteine desulfurase] + A + AMP + diphosphate + H(+). It participates in tRNA modification. Functionally, catalyzes the ATP-dependent 2-thiolation of cytidine in position 32 of tRNA, to form 2-thiocytidine (s(2)C32). The sulfur atoms are provided by the cysteine/cysteine desulfurase (IscS) system. This chain is tRNA-cytidine(32) 2-sulfurtransferase, found in Aliivibrio fischeri (strain ATCC 700601 / ES114) (Vibrio fischeri).